The chain runs to 851 residues: DNA mismatch repair protein MutS (851 aa).

Gly602–Ser609 provides a ligand contact to ATP.

Belongs to the DNA mismatch repair MutS family.

Its function is as follows. This protein is involved in the repair of mismatches in DNA. It is possible that it carries out the mismatch recognition step. This protein has a weak ATPase activity. This is DNA mismatch repair protein MutS from Streptococcus pyogenes serotype M2 (strain MGAS10270).